The primary structure comprises 277 residues: Peptide deformylase 1A, chloroplastic (277 aa).

Positions 196 and 238 each coordinate Zn(2+). Residue Glu-239 is part of the active site. Residue His-242 participates in Zn(2+) binding.

It belongs to the polypeptide deformylase family. Zn(2+) serves as cofactor.

Its subcellular location is the plastid. The protein localises to the chloroplast stroma. It carries out the reaction N-terminal N-formyl-L-methionyl-[peptide] + H2O = N-terminal L-methionyl-[peptide] + formate. Removes the formyl group from the N-terminal Met of newly synthesized proteins. The sequence is that of Peptide deformylase 1A, chloroplastic (PDF1A) from Solanum lycopersicum (Tomato).